The primary structure comprises 114 residues: Mobility group protein 1A (114 aa).

Positions 5–71 (PKRPLSAYML…EYEKAMKEFE (67 aa)) form a DNA-binding region, HMG box. Residues 69–114 (EFERNGGDKSSGASTKKRGKAAEKKKPAKKSKKKDSEDDEEEDESD) are disordered. Over residues 105 to 114 (EDDEEEDESD) the composition is skewed to acidic residues.

The protein belongs to the HMGB family.

It is found in the nucleus. It localises to the chromosome. Found in condensed chromomeres. Binds preferentially to AT-rich DNA. This chain is Mobility group protein 1A (HMG1A), found in Chironomus tentans (Midge).